The chain runs to 554 residues: MLO-like protein 14 (554 aa).

The Extracellular segment spans residues 1-13 (MREETEPSERTLG). Residues 14 to 34 (LTPTWSVATVLTIFVFVSLIV) traverse the membrane as a helical segment. Over 35 to 63 (ERSIHRLSNWLQKTKRKPLFAALEKMKEE) the chain is Cytoplasmic. Residues 64–84 (LMLLGFISLLLTATSSTIANI) form a helical membrane-spanning segment. The Extracellular segment spans residues 85 to 158 (CVSSSFHNDR…SYEGMEQLHR (74 aa)). The chain crosses the membrane as a helical span at residues 159-179 (FIFIMAVTHVTYSCLTMLLAI). Residues 180-281 (VKIHRWRIWE…MIRSMEEEFQ (102 aa)) lie on the Cytoplasmic side of the membrane. Residues 282–302 (KIVGVSGPLWGFVVGFMLFNI) traverse the membrane as a helical segment. A topological domain (extracellular) is located at residue Lys-303. Residues 304-324 (GSNLYFWLAIIPITLVLLVGA) form a helical membrane-spanning segment. Residues 325 to 366 (KLQHVIATLALENASITEYASGIKLRPRDELFWFKKPELLLS) are Cytoplasmic-facing. A helical membrane pass occupies residues 367 to 387 (LIHFIQFQNAFELASFFWFWW). At 388-406 (QFGYNSCFLRNHLLVYLRL) the chain is on the extracellular side. Residues 407-427 (ILGFSGQFLCSYSTLPLYALV) form a helical membrane-spanning segment. The Cytoplasmic portion of the chain corresponds to 428-554 (TQMGTNYKAA…SSSLPMRREC (127 aa)). A calmodulin-binding region spans residues 441–462 (QRVRETINGWGKATRRKRRHGL).

Belongs to the MLO family.

It localises to the membrane. In terms of biological role, may be involved in modulation of pathogen defense and leaf cell death. Activity seems to be regulated by Ca(2+)-dependent calmodulin binding and seems not to require heterotrimeric G proteins. The chain is MLO-like protein 14 (MLO14) from Arabidopsis thaliana (Mouse-ear cress).